The primary structure comprises 206 residues: Large ribosomal subunit protein uL4 (206 aa).

Residues 46-77 (GTRAQKDREQVRHSTKKPFKQKGTGRARAGMT) are disordered. A compositionally biased stretch (basic residues) spans 58–70 (HSTKKPFKQKGTG).

Belongs to the universal ribosomal protein uL4 family. In terms of assembly, part of the 50S ribosomal subunit.

Functionally, one of the primary rRNA binding proteins, this protein initially binds near the 5'-end of the 23S rRNA. It is important during the early stages of 50S assembly. It makes multiple contacts with different domains of the 23S rRNA in the assembled 50S subunit and ribosome. Its function is as follows. Forms part of the polypeptide exit tunnel. The sequence is that of Large ribosomal subunit protein uL4 from Polaromonas sp. (strain JS666 / ATCC BAA-500).